The following is a 387-amino-acid chain: 3-ketoacyl-CoA thiolase (387 aa).

The active-site Acyl-thioester intermediate is the C91. Catalysis depends on proton acceptor residues H343 and C373.

This sequence belongs to the thiolase-like superfamily. Thiolase family. Heterotetramer of two alpha chains (FadB) and two beta chains (FadA).

Its subcellular location is the cytoplasm. It carries out the reaction an acyl-CoA + acetyl-CoA = a 3-oxoacyl-CoA + CoA. Its pathway is lipid metabolism; fatty acid beta-oxidation. Functionally, catalyzes the final step of fatty acid oxidation in which acetyl-CoA is released and the CoA ester of a fatty acid two carbons shorter is formed. The chain is 3-ketoacyl-CoA thiolase from Aliivibrio fischeri (strain ATCC 700601 / ES114) (Vibrio fischeri).